Reading from the N-terminus, the 626-residue chain is DNA mismatch repair protein MutL (626 aa).

The interval 352 to 399 (QPPSPSFTSRPSSAGYASGSWHPAVSSPRTEWSPQTAHPAHRPLDLGA) is disordered. Residues 378–387 (SPRTEWSPQT) show a composition bias toward polar residues.

This sequence belongs to the DNA mismatch repair MutL/HexB family.

Functionally, this protein is involved in the repair of mismatches in DNA. It is required for dam-dependent methyl-directed DNA mismatch repair. May act as a 'molecular matchmaker', a protein that promotes the formation of a stable complex between two or more DNA-binding proteins in an ATP-dependent manner without itself being part of a final effector complex. The polypeptide is DNA mismatch repair protein MutL (Brucella anthropi (strain ATCC 49188 / DSM 6882 / CCUG 24695 / JCM 21032 / LMG 3331 / NBRC 15819 / NCTC 12168 / Alc 37) (Ochrobactrum anthropi)).